The primary structure comprises 662 residues: Biosynthetic arginine decarboxylase (662 aa).

An N6-(pyridoxal phosphate)lysine modification is found at Lys-127. 307-317 serves as a coordination point for substrate; it reads FDVGGGLGVDY.

The protein belongs to the Orn/Lys/Arg decarboxylase class-II family. SpeA subfamily. Homotetramer. Mg(2+) is required as a cofactor. Requires pyridoxal 5'-phosphate as cofactor.

The protein resides in the periplasm. The enzyme catalyses L-arginine + H(+) = agmatine + CO2. It participates in amine and polyamine biosynthesis; agmatine biosynthesis; agmatine from L-arginine: step 1/1. Functionally, catalyzes the biosynthesis of agmatine from arginine. This is Biosynthetic arginine decarboxylase from Shigella flexneri.